The chain runs to 428 residues: Divergent protein kinase domain 1A (428 aa).

Over 1 to 27 (MARGLFSRAWLSKTHHFQARLSYIRVK) the chain is Cytoplasmic. The helical transmembrane segment at 28 to 48 (YLFLTWLAVFVSSWVVYVQYS) threads the bilayer. The Lumenal segment spans residues 49–428 (TYTELCRGRE…WKQISHTTDS (380 aa)).

Belongs to the DIPK family. In terms of processing, among the many cysteines in the lumenal domain, most are probably involved in disulfide bonds.

The protein resides in the endoplasmic reticulum membrane. The protein is Divergent protein kinase domain 1A (dipk1a) of Danio rerio (Zebrafish).